We begin with the raw amino-acid sequence, 54 residues long: U7-myrmicitoxin-Tb1a (54 aa).

An N-terminal signal peptide occupies residues 1 to 26 (MQLSHLLLAFAMIFVMTIIHTPQVQA). Residues 27 to 36 (DAMADADADA) constitute a propeptide that is removed on maturation. A disulfide bridge links cysteine 40 with cysteine 49.

In terms of tissue distribution, expressed by the venom gland.

The protein resides in the secreted. In terms of biological role, venom protein with unknown function. Does not induce paralysis when a high dose is administered by intrathoracic injection into the blowfly Lucilia caesar. In Tetramorium bicarinatum (Tramp ant), this protein is U7-myrmicitoxin-Tb1a.